The chain runs to 152 residues: UPF0225 protein YchJ (152 aa).

Belongs to the UPF0225 family.

The polypeptide is UPF0225 protein YchJ (Escherichia coli O127:H6 (strain E2348/69 / EPEC)).